Reading from the N-terminus, the 130-residue chain is Transcription antitermination protein NusB (130 aa).

It belongs to the NusB family.

Functionally, involved in transcription antitermination. Required for transcription of ribosomal RNA (rRNA) genes. Binds specifically to the boxA antiterminator sequence of the ribosomal RNA (rrn) operons. The polypeptide is Transcription antitermination protein NusB (Bacillus velezensis (strain DSM 23117 / BGSC 10A6 / LMG 26770 / FZB42) (Bacillus amyloliquefaciens subsp. plantarum)).